The sequence spans 383 residues: ATP phosphoribosyltransferase regulatory subunit (383 aa).

It belongs to the class-II aminoacyl-tRNA synthetase family. HisZ subfamily. Heteromultimer composed of HisG and HisZ subunits.

It localises to the cytoplasm. It functions in the pathway amino-acid biosynthesis; L-histidine biosynthesis; L-histidine from 5-phospho-alpha-D-ribose 1-diphosphate: step 1/9. Required for the first step of histidine biosynthesis. May allow the feedback regulation of ATP phosphoribosyltransferase activity by histidine. In Chromobacterium violaceum (strain ATCC 12472 / DSM 30191 / JCM 1249 / CCUG 213 / NBRC 12614 / NCIMB 9131 / NCTC 9757 / MK), this protein is ATP phosphoribosyltransferase regulatory subunit.